Here is a 160-residue protein sequence, read N- to C-terminus: 6,7-dimethyl-8-ribityllumazine synthase (160 aa).

5-amino-6-(D-ribitylamino)uracil contacts are provided by residues tryptophan 28, 59-61, and 81-83; these read ALE and CVI. 86-87 is a binding site for (2S)-2-hydroxy-3-oxobutyl phosphate; the sequence is ET. The active-site Proton donor is the histidine 89. Asparagine 114 contributes to the 5-amino-6-(D-ribitylamino)uracil binding site. Position 128 (arginine 128) interacts with (2S)-2-hydroxy-3-oxobutyl phosphate.

Belongs to the DMRL synthase family.

It catalyses the reaction (2S)-2-hydroxy-3-oxobutyl phosphate + 5-amino-6-(D-ribitylamino)uracil = 6,7-dimethyl-8-(1-D-ribityl)lumazine + phosphate + 2 H2O + H(+). It participates in cofactor biosynthesis; riboflavin biosynthesis; riboflavin from 2-hydroxy-3-oxobutyl phosphate and 5-amino-6-(D-ribitylamino)uracil: step 1/2. In terms of biological role, catalyzes the formation of 6,7-dimethyl-8-ribityllumazine by condensation of 5-amino-6-(D-ribitylamino)uracil with 3,4-dihydroxy-2-butanone 4-phosphate. This is the penultimate step in the biosynthesis of riboflavin. This chain is 6,7-dimethyl-8-ribityllumazine synthase, found in Corynebacterium urealyticum (strain ATCC 43042 / DSM 7109).